Reading from the N-terminus, the 109-residue chain is Mitochondrial pyruvate carrier 1 (109 aa).

Position 2 is an N-acetylalanine (Ala-2). The Mitochondrial matrix segment spans residues 2–20 (AGALVRKAADYVRSKDFRD). The chain crosses the membrane as a helical span at residues 21-41 (YLMSTHFWGPVANWGLPIAAI). Residues 42–52 (NDMKKSPEIIS) lie on the Mitochondrial intermembrane side of the membrane. A helical transmembrane segment spans residues 53-71 (GRMTFALCCYSLTFMRFAY). Lys-72 bears the N6-acetyllysine mark. Residues 72-109 (KVQPRNWLLFACHATNEVAQLIQGGRLIKHEMTKTASA) lie on the Mitochondrial matrix side of the membrane.

It belongs to the mitochondrial pyruvate carrier (MPC) (TC 2.A.105) family. As to quaternary structure, homodimer. Forms heterodimer with MPC2. The heterodimer is the more stable and dominant form.

It localises to the mitochondrion inner membrane. It catalyses the reaction pyruvate(out) + H(+)(out) = pyruvate(in) + H(+)(in). In terms of biological role, mediates the uptake of pyruvate into mitochondria. This is Mitochondrial pyruvate carrier 1 (MPC1) from Homo sapiens (Human).